Here is a 148-residue protein sequence, read N- to C-terminus: MLRVLSRRFYCKIAAKTNFKTAKLDFKELRYATKVPQTPVDTVFPETNANRVEIDAKTIQLLERLSLVNLDSEQALATLNSSIQFADKIAHINTENVRPLYTVLENQQLQLRNDEVKEGDCRVELLRNAKVTDEDYYVSPPGNIPLEQ.

It belongs to the GatC family. In terms of assembly, subunit of the heterotrimeric GatCAB amidotransferase (AdT) complex, composed of A, B and C subunits.

It is found in the mitochondrion. The enzyme catalyses L-glutamyl-tRNA(Gln) + L-glutamine + ATP + H2O = L-glutaminyl-tRNA(Gln) + L-glutamate + ADP + phosphate + H(+). Functionally, allows the formation of correctly charged Gln-tRNA(Gln) through the transamidation of misacylated Glu-tRNA(Gln) in the mitochondria. The reaction takes place in the presence of glutamine and ATP through an activated gamma-phospho-Glu-tRNA(Gln). This Drosophila pseudoobscura pseudoobscura (Fruit fly) protein is Glutamyl-tRNA(Gln) amidotransferase subunit C, mitochondrial.